The primary structure comprises 1458 residues: DNA polymerase alpha catalytic subunit (1458 aa).

2 disordered regions span residues 1–25 (MSDSGSFAASRSRREKTEKSGRKEA) and 89–119 (DLEDNALADSGKGAKGAPKDKTNVKKSSVSK). The segment covering 15 to 25 (EKTEKSGRKEA) has biased composition (basic and acidic residues). DNA-binding regions lie at residues 650–715 (RINS…VHQI) and 1241–1373 (QFRA…ACSK). Zn(2+) contacts are provided by Cys-1280, Cys-1283, Cys-1307, Cys-1312, Cys-1345, Cys-1350, Cys-1368, and Cys-1371. The CysA-type zinc-finger motif lies at 1280-1310 (CPKCGTENIYDNVFDGSGLQIEPGLKRCSKP). The CysB motif signature appears at 1345–1371 (CEEKTCQNRTRRLPLSFSRNGPICQAC).

It belongs to the DNA polymerase type-B family. As to quaternary structure, the DNA polymerase alpha complex is composed of four subunits: the catalytic subunit POLA1, the regulatory subunit POLA2, and the small and the large primase subunits PRIM1 and PRIM2 respectively. Interacts with PARP1; this interaction functions as part of the control of replication fork progression. Interacts with MCM10 and WDHD1; these interactions recruit the polymerase alpha complex to the pre-replicative complex bound to DNA. Interacts with RPA1; this interaction stabilizes the replicative complex and reduces the misincorporation rate of DNA polymerase alpha by acting as a fidelity clamp.

The protein localises to the nucleus. The enzyme catalyses DNA(n) + a 2'-deoxyribonucleoside 5'-triphosphate = DNA(n+1) + diphosphate. Its function is as follows. Plays an essential role in the initiation of DNA replication. During the S phase of the cell cycle, the DNA polymerase alpha complex (composed of a catalytic subunit POLA1/p180, a regulatory subunit POLA2/p70 and two primase subunits PRIM1/p49 and PRIM2/p58) is recruited to DNA at the replicative forks via direct interactions with MCM10 and WDHD1. The primase subunit of the polymerase alpha complex initiates DNA synthesis by oligomerising short RNA primers on both leading and lagging strands. These primers are initially extended by the polymerase alpha catalytic subunit and subsequently transferred to polymerase delta and polymerase epsilon for processive synthesis on the lagging and leading strand, respectively. The reason this transfer occurs is because the polymerase alpha has limited processivity and lacks intrinsic 3' exonuclease activity for proofreading error, and therefore is not well suited for replicating long complexes. The polypeptide is DNA polymerase alpha catalytic subunit (pola1) (Xenopus laevis (African clawed frog)).